A 947-amino-acid chain; its full sequence is Pyruvate, phosphate dikinase 1, chloroplastic (947 aa).

The N-terminal 62 residues, Met1–Arg62, are a transit peptide targeting the chloroplast. The segment at Asp21–Arg54 is disordered. N-acetylalanine; partial is present on Ala63. The residue at position 309 (Thr309) is a Phosphothreonine. Ser506 bears the Phosphoserine mark. At Thr527 the chain carries Phosphothreonine; by PDRP1. At Ser528 the chain carries Phosphoserine; by PDRP1. The active-site Tele-phosphohistidine intermediate is the His529. Positions 635, 692, 821, 842, 843, 844, and 845 each coordinate substrate. Glu821 is a Mg(2+) binding site. Residue Asp845 coordinates Mg(2+). Cys907 serves as the catalytic Proton donor.

It belongs to the PEP-utilizing enzyme family. In terms of assembly, homotetramer. Mg(2+) serves as cofactor. Post-translationally, phosphorylation of Thr-527 in the dark inactivates the enzyme, dephosphorylation upon light stimulation reactivates the enzyme. More highly phosphorylated when grown under high rather than low light regimes (70 vs 900 umol photons/m-2/s). the degree of phosphorylation is strictly regulated by light intensity and the light/dark transition has no influence. Phosphorylated in both mesophyll and bundle sheath cells. The phosphorylation at Ser-528 may be important for the phosphorylation at Thr-527 and may also be regulated by light intensity. As to expression, isoform C4PPDKZM1 mainly localized in mesophyll cells and only a low level is found in bundle sheath cells. Isoform CYPPDKZM1 expressed in roots, stems and etiolated leaves.

It localises to the plastid. It is found in the chloroplast. The protein resides in the cytoplasm. It carries out the reaction pyruvate + phosphate + ATP = phosphoenolpyruvate + AMP + diphosphate + H(+). Its pathway is photosynthesis; C4 acid pathway. Activated by light-induced dephosphorylation. Inhibited by dark-induced phosphorylation. Both reactions are catalyzed by PDRP1. Inactivated by cold due to the dissociation of the homotetramer. Independent of circadian regulation. Its function is as follows. Formation of phosphoenolpyruvate, which is the primary acceptor of CO(2) in C4 and some Crassulacean acid metabolism plants. In Zea mays (Maize), this protein is Pyruvate, phosphate dikinase 1, chloroplastic.